We begin with the raw amino-acid sequence, 712 residues long: Saccharolysin (712 aa).

The residue at position 73 (S73) is a Phosphoserine. A Zn(2+)-binding site is contributed by H501. Residue E502 is part of the active site. H505 and H508 together coordinate Zn(2+).

This sequence belongs to the peptidase M3 family. Requires Zn(2+) as cofactor.

The protein resides in the cytoplasm. It catalyses the reaction Cleavage of Pro-|-Phe and Ala-|-Ala bonds.. Could be involved in late stage of protein degradation. This chain is Saccharolysin (PRD1), found in Saccharomyces cerevisiae (strain ATCC 204508 / S288c) (Baker's yeast).